Reading from the N-terminus, the 449-residue chain is Hyaluronidase-1 (449 aa).

A signal peptide spans 1–23 (MYHLWIKCLAAWIFLKRCNGVHA). Disulfide bonds link Cys47-Cys340 and Cys211-Cys227. 3 N-linked (GlcNAc...) asparagine glycosylation sites follow: Asn67, Asn103, and Asn111. The Proton donor role is filled by Glu135. N-linked (GlcNAc...) asparagine glycosylation is present at Asn153. N-linked (GlcNAc...) asparagine glycosylation is present at Asn357. 3 cysteine pairs are disulfide-bonded: Cys365/Cys376, Cys370/Cys427, and Cys429/Cys438. An N-linked (GlcNAc...) asparagine glycan is attached at Asn401. Residues 427 to 438 (CQCYQGWKGLYC) form the EGF-like domain.

The protein belongs to the glycosyl hydrolase 56 family. Monomer. Expressed by the venom gland.

Its subcellular location is the secreted. It carries out the reaction Random hydrolysis of (1-&gt;4)-linkages between N-acetyl-beta-D-glucosamine and D-glucuronate residues in hyaluronate.. Its function is as follows. Snake venom endo-hyaluronidase that degrades hyaluronan to smaller oligosaccharide fragments. In venom, it is not toxic by itself, but increases the diffusion of other venom proteins by degrading the extracellular matrix. In addition, it displays antiedematogenic activity. The protein is Hyaluronidase-1 of Bitis arietans (African puff adder).